The sequence spans 94 residues: C-C motif chemokine 17 (94 aa).

The first 23 residues, 1–23 (MAPLKMLALVTLLLGASLQHIHA), serve as a signal peptide directing secretion. Cystine bridges form between C33–C57 and C34–C73.

The protein belongs to the intercrine beta (chemokine CC) family. Constitutively expressed in thymus. Detected at lower levels in the lung, colon and small intestine. Expressed in stimulated peripheral blood mononuclear cells, but not in resting cells.

It is found in the secreted. In terms of biological role, chemokine, which displays chemotactic activity for T lymphocytes, preferentially Th2 cells, but not monocytes or granulocytes. Therefore plays an important role in a wide range of inflammatory and immunological processes. Acts by binding to CCR4 at T-cell surface. Mediates GM-CSF/CSF2-driven pain and inflammation. In the brain, required to maintain the typical, highly branched morphology of hippocampal microglia under homeostatic conditions. May be important for the appropriate adaptation of microglial morphology and synaptic plasticity to acute lipopolysaccharide (LPS)-induced neuroinflammation. Plays a role in wound healing, mainly by inducing fibroblast migration into the wound. The chain is C-C motif chemokine 17 (CCL17) from Homo sapiens (Human).